The primary structure comprises 143 residues: UPF0251 protein CA_C3166 (143 aa).

The protein belongs to the UPF0251 family.

The protein is UPF0251 protein CA_C3166 of Clostridium acetobutylicum (strain ATCC 824 / DSM 792 / JCM 1419 / IAM 19013 / LMG 5710 / NBRC 13948 / NRRL B-527 / VKM B-1787 / 2291 / W).